The sequence spans 164 residues: Cell division protein SepF (164 aa).

A disordered region spans residues 21 to 71 (YQQGQQPAQQQQSPVQAVPTPVPAPQQQAKRAPVTPLHKPSTTTRNAAPAE). Positions 22 to 49 (QQGQQPAQQQQSPVQAVPTPVPAPQQQA) are enriched in low complexity.

The protein belongs to the SepF family. As to quaternary structure, homodimer. Interacts with FtsZ.

It localises to the cytoplasm. Cell division protein that is part of the divisome complex and is recruited early to the Z-ring. Probably stimulates Z-ring formation, perhaps through the cross-linking of FtsZ protofilaments. Its function overlaps with FtsA. This chain is Cell division protein SepF, found in Clavibacter sepedonicus (Clavibacter michiganensis subsp. sepedonicus).